Reading from the N-terminus, the 363-residue chain is Serine/threonine-protein kinase SRK2A (363 aa).

The Protein kinase domain occupies 4–260; that stretch reads YELVKDIGAG…IAEIKKHSWF (257 aa). Residues 10-18 and K33 contribute to the ATP site; that span reads IGAGNFGVA. The active-site Proton acceptor is the D123. Positions 306-363 are disordered; sequence SRSIGGFGWGGNGDADGKEEDAEDVEEEEEEVEEEEDDEDEYDKTVKEVHASGEVRIS. Residues 310 to 319 show a composition bias toward gly residues; that stretch reads GGFGWGGNGD. Residues 322 to 347 are compositionally biased toward acidic residues; sequence GKEEDAEDVEEEEEEVEEEEDDEDEY. Residues 348–363 are compositionally biased toward basic and acidic residues; it reads DKTVKEVHASGEVRIS.

Belongs to the protein kinase superfamily. Ser/Thr protein kinase family. Interacts with TOPP1. Expressed in seedlings.

The catalysed reaction is L-seryl-[protein] + ATP = O-phospho-L-seryl-[protein] + ADP + H(+). It carries out the reaction L-threonyl-[protein] + ATP = O-phospho-L-threonyl-[protein] + ADP + H(+). In Arabidopsis thaliana (Mouse-ear cress), this protein is Serine/threonine-protein kinase SRK2A (SRK2A).